The following is a 299-amino-acid chain: GTPase Era (299 aa).

In terms of domain architecture, Era-type G spans 5–172 (KSGFVSIIGR…IDVLKTYLPE (168 aa)). Residues 13–20 (GRPNVGKS) form a G1 region. Residue 13–20 (GRPNVGKS) participates in GTP binding. The interval 39–43 (QTTRN) is G2. The tract at residues 60–63 (DTPG) is G3. GTP-binding positions include 60–64 (DTPGI) and 122–125 (NKID). The tract at residues 122–125 (NKID) is G4. The G5 stretch occupies residues 151 to 153 (ISA). A KH type-2 domain is found at 203–280 (TSEEIPHAIG…YLELWVKVQR (78 aa)).

It belongs to the TRAFAC class TrmE-Era-EngA-EngB-Septin-like GTPase superfamily. Era GTPase family. In terms of assembly, monomer.

Its subcellular location is the cytoplasm. The protein resides in the cell membrane. In terms of biological role, an essential GTPase that binds both GDP and GTP, with rapid nucleotide exchange. Plays a role in 16S rRNA processing and 30S ribosomal subunit biogenesis and possibly also in cell cycle regulation and energy metabolism. This chain is GTPase Era, found in Staphylococcus aureus (strain Mu3 / ATCC 700698).